Here is a 402-residue protein sequence, read N- to C-terminus: Methylthioribose-1-phosphate isomerase (402 aa).

Asp275 acts as the Proton donor in catalysis.

Belongs to the eIF-2B alpha/beta/delta subunits family. MtnA subfamily.

The protein localises to the cytoplasm. Its subcellular location is the nucleus. The enzyme catalyses 5-(methylsulfanyl)-alpha-D-ribose 1-phosphate = 5-(methylsulfanyl)-D-ribulose 1-phosphate. The protein operates within amino-acid biosynthesis; L-methionine biosynthesis via salvage pathway; L-methionine from S-methyl-5-thio-alpha-D-ribose 1-phosphate: step 1/6. In terms of biological role, catalyzes the interconversion of methylthioribose-1-phosphate (MTR-1-P) into methylthioribulose-1-phosphate (MTRu-1-P). This Clavispora lusitaniae (strain ATCC 42720) (Yeast) protein is Methylthioribose-1-phosphate isomerase.